The chain runs to 173 residues: Cytochrome c-type biogenesis protein CcmE (173 aa).

The Cytoplasmic portion of the chain corresponds to 1–7; that stretch reads MTRKSRR. The chain crosses the membrane as a helical; Signal-anchor for type II membrane protein span at residues 8-28; it reads LILIAACGAVLALALGLILSA. Over 29–173 the chain is Periplasmic; that stretch reads MSGSIVFFRS…DATLGQRSER (145 aa). Heme is bound by residues H122 and Y126. A disordered region spans residues 134-173; sequence ALKAQGRWQEGGGKDASKAAPKDAAKPETADATLGQRSER. Residues 145–162 show a composition bias toward basic and acidic residues; sequence GGKDASKAAPKDAAKPET.

It belongs to the CcmE/CycJ family.

The protein localises to the cell inner membrane. Functionally, heme chaperone required for the biogenesis of c-type cytochromes. Transiently binds heme delivered by CcmC and transfers the heme to apo-cytochromes in a process facilitated by CcmF and CcmH. In Methylorubrum extorquens (strain CM4 / NCIMB 13688) (Methylobacterium extorquens), this protein is Cytochrome c-type biogenesis protein CcmE.